A 472-amino-acid polypeptide reads, in one-letter code: Acyltransferase PapA3 (472 aa).

This sequence belongs to the PapA acyltransferase family.

It carries out the reaction a long-chain fatty acyl-CoA + alpha,alpha-trehalose = a 2-O-(long-chain fatty acyl)-alpha,alpha-trehalose + CoA. It catalyses the reaction a mycolipenoyl-CoA + a 2-O-(long-chain fatty acyl)-alpha,alpha-trehalose = a 2-O-(long-chain fatty acyl)-3-O-mycolipenoyl-trehalose + CoA. The catalysed reaction is alpha,alpha-trehalose + hexadecanoyl-CoA = 2-O-hexadecanoyl-alpha,alpha-trehalose + CoA. The enzyme catalyses 2-O-hexadecanoyl-alpha,alpha-trehalose + hexadecanoyl-CoA = 2-O,3-O-dihexadecanoyl-alpha,alpha-trehalose + CoA. Its function is as follows. Involved in the biosynthesis of polyacyltrehalose (PAT), a pentaacylated, trehalose-based glycolipid that could have a role in anchoring the bacterial capsule. Catalyzes the sequential transfer of two palmitoyl groups onto a single glucose residue of trehalose generating the diacylated product 2,3-diacyltrehalose (trehalose dipalmitate). This Mycobacterium tuberculosis (strain CDC 1551 / Oshkosh) protein is Acyltransferase PapA3 (papA3).